Reading from the N-terminus, the 282-residue chain is Phosphate import ATP-binding protein PstB (282 aa).

Positions 1-33 (MNMAETQLNPIARPTAPAGFDPAQSGQSQAPSR) are disordered. The ABC transporter domain maps to 36–277 (IEINDLNFFY…PVRKETEDYI (242 aa)). An ATP-binding site is contributed by 68–75 (GPSGCGKS).

The protein belongs to the ABC transporter superfamily. Phosphate importer (TC 3.A.1.7) family. In terms of assembly, the complex is composed of two ATP-binding proteins (PstB), two transmembrane proteins (PstC and PstA) and a solute-binding protein (PstS).

It is found in the cell inner membrane. It catalyses the reaction phosphate(out) + ATP + H2O = ADP + 2 phosphate(in) + H(+). In terms of biological role, part of the ABC transporter complex PstSACB involved in phosphate import. Responsible for energy coupling to the transport system. The sequence is that of Phosphate import ATP-binding protein PstB from Paraburkholderia xenovorans (strain LB400).